We begin with the raw amino-acid sequence, 307 residues long: MNTGKPQKRAVNGVLLLDKPEGLSSNTALQKARRLFHAEKAGHTGVLDPLATGLLPVCFGEATKFAQYLLDADKAYTATLKLGEASSTGDAEGEIIATARADISLAEFQTACQALTGNIRQVPPMFSALKHEGKPLYEYARKGIVIERKARYITVYAIDIAEFDAPKAVIDVRCSKGTYIRTLSEDIAKHIGTFAHLTALRRTETAGFTIAQSHTLEALANLNETERDSLLLPCDVLVSHFPQTVLNDYAVHMLHCGQRPRFEEDLPSDTPVRVYTENGRFVGLAEYQKEICRLKALRLMNTAASAA.

Residue aspartate 48 is the Nucleophile of the active site.

The protein belongs to the pseudouridine synthase TruB family. Type 1 subfamily.

It carries out the reaction uridine(55) in tRNA = pseudouridine(55) in tRNA. Functionally, responsible for synthesis of pseudouridine from uracil-55 in the psi GC loop of transfer RNAs. This Neisseria meningitidis serogroup B (strain ATCC BAA-335 / MC58) protein is tRNA pseudouridine synthase B.